A 156-amino-acid polypeptide reads, in one-letter code: Aspartate carbamoyltransferase regulatory chain (156 aa).

Zn(2+)-binding residues include cysteine 109, cysteine 114, cysteine 140, and cysteine 143.

It belongs to the PyrI family. Contains catalytic and regulatory chains. Zn(2+) serves as cofactor.

Functionally, involved in allosteric regulation of aspartate carbamoyltransferase. This is Aspartate carbamoyltransferase regulatory chain from Methanosarcina barkeri (strain Fusaro / DSM 804).